A 401-amino-acid polypeptide reads, in one-letter code: Argininosuccinate synthase (401 aa).

ATP contacts are provided by residues 10 to 18 (AYSGGVDTS) and Ala38. An L-citrulline-binding site is contributed by Tyr89. Residue Gly119 participates in ATP binding. L-aspartate contacts are provided by Thr121, Asn125, and Asp126. Asn125 is an L-citrulline binding site. The L-citrulline site is built by Arg129, Ser177, Ser186, Glu262, and Tyr274.

Belongs to the argininosuccinate synthase family. Type 1 subfamily. In terms of assembly, homotetramer.

Its subcellular location is the cytoplasm. The enzyme catalyses L-citrulline + L-aspartate + ATP = 2-(N(omega)-L-arginino)succinate + AMP + diphosphate + H(+). It participates in amino-acid biosynthesis; L-arginine biosynthesis; L-arginine from L-ornithine and carbamoyl phosphate: step 2/3. The chain is Argininosuccinate synthase from Microcystis aeruginosa (strain NIES-843 / IAM M-2473).